We begin with the raw amino-acid sequence, 289 residues long: ATP phosphoribosyltransferase (289 aa).

This sequence belongs to the ATP phosphoribosyltransferase family. Long subfamily. Requires Mg(2+) as cofactor.

The protein localises to the cytoplasm. It catalyses the reaction 1-(5-phospho-beta-D-ribosyl)-ATP + diphosphate = 5-phospho-alpha-D-ribose 1-diphosphate + ATP. The protein operates within amino-acid biosynthesis; L-histidine biosynthesis; L-histidine from 5-phospho-alpha-D-ribose 1-diphosphate: step 1/9. Its activity is regulated as follows. Feedback inhibited by histidine. Its function is as follows. Catalyzes the condensation of ATP and 5-phosphoribose 1-diphosphate to form N'-(5'-phosphoribosyl)-ATP (PR-ATP). Has a crucial role in the pathway because the rate of histidine biosynthesis seems to be controlled primarily by regulation of HisG enzymatic activity. The polypeptide is ATP phosphoribosyltransferase (Methanosarcina acetivorans (strain ATCC 35395 / DSM 2834 / JCM 12185 / C2A)).